The following is a 322-amino-acid chain: ATP-dependent 6-phosphofructokinase (322 aa).

Gly11 is an ATP binding site. Residue 21–25 (RAVTR) coordinates ADP. Residues 72-73 (RC) and 102-105 (GDGS) contribute to the ATP site. Residue Asp103 participates in Mg(2+) binding. Residue 127–129 (TID) participates in substrate binding. Residue Asp129 is the Proton acceptor of the active site. Arg156 is a binding site for ADP. Substrate is bound by residues Arg164 and 171-173 (MGR). ADP is bound by residues 187 to 189 (GAE), Arg213, and 215 to 217 (KKH). Substrate is bound by residues Glu224, Arg245, and 251–254 (HIQR).

Belongs to the phosphofructokinase type A (PFKA) family. ATP-dependent PFK group I subfamily. Prokaryotic clade 'B1' sub-subfamily. In terms of assembly, homotetramer. Mg(2+) serves as cofactor.

It localises to the cytoplasm. The enzyme catalyses beta-D-fructose 6-phosphate + ATP = beta-D-fructose 1,6-bisphosphate + ADP + H(+). The protein operates within carbohydrate degradation; glycolysis; D-glyceraldehyde 3-phosphate and glycerone phosphate from D-glucose: step 3/4. With respect to regulation, allosterically activated by ADP and other diphosphonucleosides, and allosterically inhibited by phosphoenolpyruvate. In terms of biological role, catalyzes the phosphorylation of D-fructose 6-phosphate to fructose 1,6-bisphosphate by ATP, the first committing step of glycolysis. The polypeptide is ATP-dependent 6-phosphofructokinase (Staphylococcus epidermidis (strain ATCC 12228 / FDA PCI 1200)).